The chain runs to 115 residues: UPF0295 protein BLi00901/BL05075 (115 aa).

The next 2 membrane-spanning stretches (helical) occupy residues L18 to L38 and V41 to G61.

This sequence belongs to the UPF0295 family.

It is found in the cell membrane. The sequence is that of UPF0295 protein BLi00901/BL05075 from Bacillus licheniformis (strain ATCC 14580 / DSM 13 / JCM 2505 / CCUG 7422 / NBRC 12200 / NCIMB 9375 / NCTC 10341 / NRRL NRS-1264 / Gibson 46).